The chain runs to 73 residues: Translation initiation factor IF-1 (73 aa).

Positions 1–73 (MAKKDGAIEV…SRGRIVYRYK (73 aa)) constitute an S1-like domain.

Belongs to the IF-1 family. As to quaternary structure, component of the 30S ribosomal translation pre-initiation complex which assembles on the 30S ribosome in the order IF-2 and IF-3, IF-1 and N-formylmethionyl-tRNA(fMet); mRNA recruitment can occur at any time during PIC assembly.

It is found in the cytoplasm. In terms of biological role, one of the essential components for the initiation of protein synthesis. Stabilizes the binding of IF-2 and IF-3 on the 30S subunit to which N-formylmethionyl-tRNA(fMet) subsequently binds. Helps modulate mRNA selection, yielding the 30S pre-initiation complex (PIC). Upon addition of the 50S ribosomal subunit IF-1, IF-2 and IF-3 are released leaving the mature 70S translation initiation complex. In Mycolicibacterium smegmatis (strain ATCC 700084 / mc(2)155) (Mycobacterium smegmatis), this protein is Translation initiation factor IF-1.